A 98-amino-acid polypeptide reads, in one-letter code: Alpha-elicitin DRE-alpha (98 aa).

3 disulfide bridges follow: C3–C71, C27–C56, and C51–C95.

This sequence belongs to the elicitin family.

It is found in the secreted. Functionally, induces local and distal defense responses (incompatible hypersensitive reaction) in plants from the solanaceae and cruciferae families. Elicits leaf necrosis and causes the accumulation of pathogenesis-related proteins. Might interact with the lipidic molecules of the plasma membrane. This is Alpha-elicitin DRE-alpha from Phytophthora drechsleri.